The sequence spans 608 residues: Putative pentatricopeptide repeat-containing protein At1g16830 (608 aa).

PPR repeat units follow at residues 107–141 (KPRV…GFVP), 142–172 (NTRA…IRFR), 173–210 (NFFS…GFYP), 211–245 (NRER…GISV), 246–280 (SVNV…GCSP), 281–315 (NLVT…GLAP), 316–350 (DIVL…KLVP), 351–381 (DQYT…IGTD), 383–417 (DLVT…DFAL), 418–452 (DCYT…KKHL), 453–487 (DAHF…KYPL), 488–522 (DVVS…GIYP), and 523–557 (NRRT…GVEL).

It belongs to the PPR family. P subfamily.

This Arabidopsis thaliana (Mouse-ear cress) protein is Putative pentatricopeptide repeat-containing protein At1g16830.